A 506-amino-acid polypeptide reads, in one-letter code: Glutamate--tRNA ligase (506 aa).

Positions 23 to 33 match the 'HIGH' region motif; it reads PSPTGTPHVGL. The short motif at 267-271 is the 'KMSKS' region element; the sequence is KLSKR. K270 is a binding site for ATP.

This sequence belongs to the class-I aminoacyl-tRNA synthetase family. Glutamate--tRNA ligase type 1 subfamily. In terms of assembly, monomer.

The protein resides in the cytoplasm. The enzyme catalyses tRNA(Glu) + L-glutamate + ATP = L-glutamyl-tRNA(Glu) + AMP + diphosphate. In terms of biological role, catalyzes the attachment of glutamate to tRNA(Glu) in a two-step reaction: glutamate is first activated by ATP to form Glu-AMP and then transferred to the acceptor end of tRNA(Glu). This Clavibacter sepedonicus (Clavibacter michiganensis subsp. sepedonicus) protein is Glutamate--tRNA ligase.